Here is a 428-residue protein sequence, read N- to C-terminus: 3-phosphoshikimate 1-carboxyvinyltransferase (428 aa).

3-phosphoshikimate-binding residues include K23, S24, and R28. K23 is a phosphoenolpyruvate binding site. G97 and R125 together coordinate phosphoenolpyruvate. S170, S171, Q172, S198, D314, N337, and K341 together coordinate 3-phosphoshikimate. Q172 lines the phosphoenolpyruvate pocket. D314 acts as the Proton acceptor in catalysis. Residues R345, R387, and K412 each coordinate phosphoenolpyruvate.

This sequence belongs to the EPSP synthase family. As to quaternary structure, monomer.

Its subcellular location is the cytoplasm. It catalyses the reaction 3-phosphoshikimate + phosphoenolpyruvate = 5-O-(1-carboxyvinyl)-3-phosphoshikimate + phosphate. It functions in the pathway metabolic intermediate biosynthesis; chorismate biosynthesis; chorismate from D-erythrose 4-phosphate and phosphoenolpyruvate: step 6/7. Functionally, catalyzes the transfer of the enolpyruvyl moiety of phosphoenolpyruvate (PEP) to the 5-hydroxyl of shikimate-3-phosphate (S3P) to produce enolpyruvyl shikimate-3-phosphate and inorganic phosphate. In Cronobacter sakazakii (strain ATCC BAA-894) (Enterobacter sakazakii), this protein is 3-phosphoshikimate 1-carboxyvinyltransferase.